We begin with the raw amino-acid sequence, 423 residues long: D-tagatose-1,6-bisphosphate aldolase subunit GatZ (423 aa).

Belongs to the GatZ/KbaZ family. GatZ subfamily. In terms of assembly, forms a complex with GatY.

Its pathway is carbohydrate metabolism; D-tagatose 6-phosphate degradation; D-glyceraldehyde 3-phosphate and glycerone phosphate from D-tagatose 6-phosphate: step 2/2. Its function is as follows. Component of the tagatose-1,6-bisphosphate aldolase GatYZ that is required for full activity and stability of the Y subunit. Could have a chaperone-like function for the proper and stable folding of GatY. When expressed alone, GatZ does not show any aldolase activity. Is involved in the catabolism of galactitol. In Klebsiella pneumoniae subsp. pneumoniae (strain ATCC 700721 / MGH 78578), this protein is D-tagatose-1,6-bisphosphate aldolase subunit GatZ.